The following is a 536-amino-acid chain: Membrane protein insertase YidC (536 aa).

The helical transmembrane segment at 7 to 27 threads the bilayer; that stretch reads IIAVVLSLFVLIGWSYLSEFM. A disordered region spans residues 43–70; it reads VQQKASEPVAQPVQTASAPAASSFAPTE. Low complexity predominate over residues 58–68; that stretch reads ASAPAASSFAP. 3 consecutive transmembrane segments (helical) span residues 346–366, 415–435, and 495–515; these read GNYGVAIIILTILVKLLFWPL, GGCLPMLLQIPVFLGLYQGLL, and IMMFMPVVFTFMFLNFPAGLV.

This sequence belongs to the OXA1/ALB3/YidC family. Type 1 subfamily. As to quaternary structure, interacts with the Sec translocase complex via SecD. Specifically interacts with transmembrane segments of nascent integral membrane proteins during membrane integration.

The protein resides in the cell inner membrane. Required for the insertion and/or proper folding and/or complex formation of integral membrane proteins into the membrane. Involved in integration of membrane proteins that insert both dependently and independently of the Sec translocase complex, as well as at least some lipoproteins. Aids folding of multispanning membrane proteins. The protein is Membrane protein insertase YidC of Oleidesulfovibrio alaskensis (strain ATCC BAA-1058 / DSM 17464 / G20) (Desulfovibrio alaskensis).